Here is a 444-residue protein sequence, read N- to C-terminus: Putative zinc metalloprotease PD_0327 (444 aa).

Residue histidine 22 participates in Zn(2+) binding. The active site involves glutamate 23. Histidine 26 contributes to the Zn(2+) binding site. Residues 98–120 traverse the membrane as a helical segment; sequence IAIVAAGPLANLLLCMLLLWVLF. Residues 192–278 form the PDZ domain; that stretch reads TLELSKLKQP…HPGMIEIRRG (87 aa). 2 helical membrane passes run 371–393 and 418–440; these read VGWF…LFPI and AMAA…AFYN.

The protein belongs to the peptidase M50B family. The cofactor is Zn(2+).

The protein resides in the cell inner membrane. The chain is Putative zinc metalloprotease PD_0327 from Xylella fastidiosa (strain Temecula1 / ATCC 700964).